We begin with the raw amino-acid sequence, 173 residues long: Adenine phosphoribosyltransferase (173 aa).

It belongs to the purine/pyrimidine phosphoribosyltransferase family. Homodimer.

Its subcellular location is the cytoplasm. The catalysed reaction is AMP + diphosphate = 5-phospho-alpha-D-ribose 1-diphosphate + adenine. It participates in purine metabolism; AMP biosynthesis via salvage pathway; AMP from adenine: step 1/1. Catalyzes a salvage reaction resulting in the formation of AMP, that is energically less costly than de novo synthesis. The chain is Adenine phosphoribosyltransferase from Thermotoga maritima (strain ATCC 43589 / DSM 3109 / JCM 10099 / NBRC 100826 / MSB8).